We begin with the raw amino-acid sequence, 648 residues long: Acetyl-coenzyme A synthetase (648 aa).

Residues 191-194 (RGGR), T310, and N334 each bind CoA. Residues 386–388 (GEP), 410–415 (DTWWQT), D499, and R514 contribute to the ATP site. Residue S522 coordinates CoA. R525 provides a ligand contact to ATP. 3 residues coordinate Mg(2+): V536, H538, and I541. A CoA-binding site is contributed by R583. The residue at position 608 (K608) is an N6-acetyllysine.

This sequence belongs to the ATP-dependent AMP-binding enzyme family. The cofactor is Mg(2+). In terms of processing, acetylated. Deacetylation by the SIR2-homolog deacetylase activates the enzyme.

The enzyme catalyses acetate + ATP + CoA = acetyl-CoA + AMP + diphosphate. In terms of biological role, catalyzes the conversion of acetate into acetyl-CoA (AcCoA), an essential intermediate at the junction of anabolic and catabolic pathways. AcsA undergoes a two-step reaction. In the first half reaction, AcsA combines acetate with ATP to form acetyl-adenylate (AcAMP) intermediate. In the second half reaction, it can then transfer the acetyl group from AcAMP to the sulfhydryl group of CoA, forming the product AcCoA. In Aeromonas salmonicida (strain A449), this protein is Acetyl-coenzyme A synthetase.